The primary structure comprises 742 residues: Zinc finger protein 280C (742 aa).

Residues K10, K23, K42, K65, K85, K123, and K135 each participate in a glycyl lysine isopeptide (Lys-Gly) (interchain with G-Cter in SUMO2) cross-link. Residues 138-168 (FTKTSPQEDSGACSVSQSDSTQDIPSSNILQ) are compositionally biased toward polar residues. The interval 138-243 (FTKTSPQEDS…QSAPGSSSLR (106 aa)) is disordered. Glycyl lysine isopeptide (Lys-Gly) (interchain with G-Cter in SUMO2) cross-links involve residues K180, K186, and K193. Residues 182–191 (PSTSKVNSVN) are compositionally biased toward polar residues. A compositionally biased stretch (low complexity) spans 200 to 222 (SISETRPCSSSSSQTAPSGASSQ). Polar residues predominate over residues 223 to 243 (TVLSNVNTSSVQSAPGSSSLR). C2H2-type zinc fingers lie at residues 323–345 (FKCF…MKHH), 360–383 (TTCQ…ESTH), 390–413 (TICK…KDTH), 420–443 (YICQ…RSSH), and 477–499 (YRCP…KLEH). Residues 523-578 (LGSSQSRASSPPSSTIPSTSLQLSVPKSKSTTTKNNSKVSANKATTTSPQTVATTT) are compositionally biased toward low complexity. Residues 523–608 (LGSSQSRASS…YKQKRQRTRK (86 aa)) are disordered. The span at 579–592 (GKPSASKPGTGTTK) shows a compositional bias: polar residues. K580 is covalently cross-linked (Glycyl lysine isopeptide (Lys-Gly) (interchain with G-Cter in SUMO2)). The segment covering 593–608 (SKAKPSYKQKRQRTRK) has biased composition (basic residues).

Its subcellular location is the nucleus. In terms of biological role, may function as a transcription factor. This Mus musculus (Mouse) protein is Zinc finger protein 280C (Znf280c).